Here is a 295-residue protein sequence, read N- to C-terminus: ATP synthase gamma chain (295 aa).

Belongs to the ATPase gamma chain family. F-type ATPases have 2 components, CF(1) - the catalytic core - and CF(0) - the membrane proton channel. CF(1) has five subunits: alpha(3), beta(3), gamma(1), delta(1), epsilon(1). CF(0) has three main subunits: a, b and c.

It localises to the cell inner membrane. Functionally, produces ATP from ADP in the presence of a proton gradient across the membrane. The gamma chain is believed to be important in regulating ATPase activity and the flow of protons through the CF(0) complex. In Sulfurimonas denitrificans (strain ATCC 33889 / DSM 1251) (Thiomicrospira denitrificans (strain ATCC 33889 / DSM 1251)), this protein is ATP synthase gamma chain.